A 528-amino-acid chain; its full sequence is GMP synthase [glutamine-hydrolyzing] (528 aa).

The region spanning serine 13–aspartate 204 is the Glutamine amidotransferase type-1 domain. Residue cysteine 90 is the Nucleophile of the active site. Catalysis depends on residues histidine 178 and glutamate 180. Residues tryptophan 205–arginine 403 enclose the GMPS ATP-PPase domain. Serine 232 to serine 238 is a binding site for ATP.

As to quaternary structure, homodimer.

It catalyses the reaction XMP + L-glutamine + ATP + H2O = GMP + L-glutamate + AMP + diphosphate + 2 H(+). Its pathway is purine metabolism; GMP biosynthesis; GMP from XMP (L-Gln route): step 1/1. Catalyzes the synthesis of GMP from XMP. The chain is GMP synthase [glutamine-hydrolyzing] from Prochlorococcus marinus (strain AS9601).